The chain runs to 371 residues: Probable acetylxylan esterase A (371 aa).

An N-terminal signal peptide occupies residues 1-19 (MRALSVFVALFSFLALSSA). Positions 32 to 304 (GSLQQVTNFG…GEQDMEWFGF (273 aa)) are catalytic. S149 acts as the Charge relay system in catalysis. N191 carries N-linked (GlcNAc...) asparagine glycosylation. The tract at residues 305–335 (TGGSSSTTTTATTPPTTSTTTSSGGSSTSTG) is disordered. A ser/Thr-rich linker region spans residues 305–336 (TGGSSSTTTTATTPPTTSTTTSSGGSSTSTGV). Residues 307–335 (GSSSTTTTATTPPTTSTTTSSGGSSTSTG) show a composition bias toward low complexity. The CBM1 domain maps to 335–371 (GVAEHWGQCGGNGWTGPTACASGYTCTVINEWYSQCL).

It belongs to the carbohydrate esterase 1 (CE1) family. AxeA subfamily. As to quaternary structure, monomer.

It is found in the secreted. It carries out the reaction Deacetylation of xylans and xylo-oligosaccharides.. It participates in glycan degradation; xylan degradation. In terms of biological role, acetylxylan esterase involved in the hydrolysis of xylan, a major structural heterogeneous polysaccharide found in plant biomass representing the second most abundant polysaccharide in the biosphere, after cellulose. Degrades acetylated xylans by cleaving acetyl side groups from the hetero-xylan backbone. The chain is Probable acetylxylan esterase A (axeA) from Aspergillus fumigatus (strain ATCC MYA-4609 / CBS 101355 / FGSC A1100 / Af293) (Neosartorya fumigata).